A 354-amino-acid polypeptide reads, in one-letter code: Guanine nucleotide-binding protein G(o) subunit alpha (354 aa).

Gly-2 carries the N-myristoyl glycine lipid modification. Cys-3 is lipidated: S-palmitoyl cysteine. Residues Lys-32–Tyr-354 enclose the G-alpha domain. The tract at residues Lys-35 to Thr-48 is G1 motif. GTP contacts are provided by residues Gly-40–Ser-47, Leu-176–Thr-182, Asp-201–Gln-205, Asn-270–Asp-273, and Ala-326. The Mg(2+) site is built by Ser-47 and Thr-182. Residues Asp-174–Thr-182 form a G2 motif region. A G3 motif region spans residues Phe-197–Arg-206. The G4 motif stretch occupies residues Ile-266 to Asp-273. Residues Thr-324–Thr-329 form a G5 motif region.

The protein belongs to the G-alpha family. G(i/o/t/z) subfamily. G proteins are composed of 3 units; alpha, beta and gamma. The alpha chain contains the guanine nucleotide binding site. Interacts (in GDP-bound form) with gpr-1; gpr-1 forms a complex with gpr-2 and lin-5. Interacts (in GDP-bound form) with gpb-1. Interacts (in GDP-bound form) with gbas-1 (via GBA motif); the interaction leads to activation of goa-1. As to expression, expressed in the ASER neuron and the intestine.

Its function is as follows. Guanine nucleotide-binding proteins (G proteins) are involved as modulators or transducers in various transmembrane signaling systems. In the 1-cell embryo, probably together with gpa-16, controls nuclear rotation and spindle elongation during mitosis. During the first embryonic cell divisions, plays a role in gpr-1/2 cortical localization and in the proper orientation of EMS blastomere mitotic spindle. Polarity determinants (par genes) may regulate lin-5/gpr-1/gpr-2/goa-1 locally to create the asymmetric forces that drive spindle movement. Involved in chemosensory responses to attractive and repellent odors detected by AWC and AWB sensory neurons, respectively. In ASER neurons, acts downstream of glr-3 to regulate cold avoidance behavior via calcium signaling, and it may also play a role in sensing cold in the intestine. Negatively regulates axon regeneration after injury downstream of the inhibitory compound arachidonoyl ethanolamide (AEA) by antagonizing the activation of the JNK pathway (mlk-1/mek-1/kgb-1). In neurons, may negatively regulate diacylglycerol (DAG) production mediated by egl-30 signaling cascade and thereby negatively regulates acetylcholine release. Couples to the muscarinic acetylcholine receptor gar-2 to negatively regulate cholinergic receptor activity in the presence of high levels of acetylcholine in ventral cord motor neurons. Plays a role in the navigational capacity of sperm and the targeting of sperm derived from males to the fertilization site in the uterus of hermaphrodites. Involved in egg-laying and in regulating dopamine-mediated locomotion. Most likely couples to the dopamine receptors dop-2 and dop-3 to positively regulate the dopamine-mediated suppression of crh-1/CREB1 transcription factor activation in cholinergic SIA neurons in the presence of food. This is Guanine nucleotide-binding protein G(o) subunit alpha from Caenorhabditis elegans.